The chain runs to 402 residues: Dual-specificity RNA methyltransferase RlmN (402 aa).

The active-site Proton acceptor is glutamate 124. The Radical SAM core domain maps to 130–370; the sequence is DADRGTLCVS…APVRTPRGRD (241 aa). Cysteine 137 and cysteine 375 are joined by a disulfide. Cysteine 144, cysteine 148, and cysteine 151 together coordinate [4Fe-4S] cluster. S-adenosyl-L-methionine is bound by residues 199-200, serine 231, 253-255, and asparagine 332; these read GE and SLH. Residue cysteine 375 is the S-methylcysteine intermediate of the active site.

The protein belongs to the radical SAM superfamily. RlmN family. It depends on [4Fe-4S] cluster as a cofactor.

The protein localises to the cytoplasm. It catalyses the reaction adenosine(2503) in 23S rRNA + 2 reduced [2Fe-2S]-[ferredoxin] + 2 S-adenosyl-L-methionine = 2-methyladenosine(2503) in 23S rRNA + 5'-deoxyadenosine + L-methionine + 2 oxidized [2Fe-2S]-[ferredoxin] + S-adenosyl-L-homocysteine. The enzyme catalyses adenosine(37) in tRNA + 2 reduced [2Fe-2S]-[ferredoxin] + 2 S-adenosyl-L-methionine = 2-methyladenosine(37) in tRNA + 5'-deoxyadenosine + L-methionine + 2 oxidized [2Fe-2S]-[ferredoxin] + S-adenosyl-L-homocysteine. Functionally, specifically methylates position 2 of adenine 2503 in 23S rRNA and position 2 of adenine 37 in tRNAs. m2A2503 modification seems to play a crucial role in the proofreading step occurring at the peptidyl transferase center and thus would serve to optimize ribosomal fidelity. The protein is Dual-specificity RNA methyltransferase RlmN of Rhizorhabdus wittichii (strain DSM 6014 / CCUG 31198 / JCM 15750 / NBRC 105917 / EY 4224 / RW1) (Sphingomonas wittichii).